Here is an 842-residue protein sequence, read N- to C-terminus: Xyloglucanase Xgh74A (842 aa).

The first 32 residues, 1–32 (MVKKFTSKIKAAVFAAVVAATAIFGPAISSQA), serve as a signal peptide directing secretion. D70 (nucleophile) is an active-site residue. BNR repeat units follow at residues 134 to 144 (RSTDRGETWEK), 185 to 196 (WRSTDYGVTWSK), 252 to 262 (YRSTDGGVTWK), and 358 to 368 (FRSTDGGATWK). The Proton donor role is filled by D480. BNR repeat units lie at residues 533-541 (FSYDGGRNW), 577-586 (VTTDNGNSWK), 616-626 (YISTDGGLTFT), 660-671 (WRSTDGGYTFEK), and 708-718 (FRSDDAGKTWV). The 71-residue stretch at 771 to 841 (DKGLVGDLNG…LLQAIPELPK (71 aa)) folds into the Dockerin domain.

This sequence belongs to the glycosyl hydrolase 74 family.

Its function is as follows. Hydrolyzes the glucosidic bonds of unbranched Glc residues in tamarind seed xyloglucan, producing XXXG, XLXG, XXLG and XLLG. Has low activity on carboxymethylcellulose, lichenan,hydroxyethylcellulose and glucuronoxylan, and no activity on xylan, polygalaturonic acid, wheat arabinoxylan, rhamnogalacturan, curdlan, laminarin, galactomannan, galactan, arabinan and pachyman or amorphous cellulose. In Acetivibrio thermocellus (strain ATCC 27405 / DSM 1237 / JCM 9322 / NBRC 103400 / NCIMB 10682 / NRRL B-4536 / VPI 7372) (Clostridium thermocellum), this protein is Xyloglucanase Xgh74A.